The chain runs to 158 residues: Transcriptional repressor NrdR (158 aa).

A zinc finger lies at 3–34 (CPSCQNTDSRVLESRAADAGRSVRRRRECLHC). The region spanning 49 to 139 (ITVLKRNGNR…VYRHFRGIND (91 aa)) is the ATP-cone domain.

This sequence belongs to the NrdR family. Zn(2+) is required as a cofactor.

In terms of biological role, negatively regulates transcription of bacterial ribonucleotide reductase nrd genes and operons by binding to NrdR-boxes. The chain is Transcriptional repressor NrdR from Prochlorococcus marinus (strain MIT 9303).